The chain runs to 594 residues: Aspartate--tRNA(Asp/Asn) ligase (594 aa).

An L-aspartate-binding site is contributed by Glu173. Positions 197 to 200 are aspartate; sequence QLFK. Arg219 contributes to the L-aspartate binding site. ATP contacts are provided by residues 219–221 and Gln228; that span reads RDE. L-aspartate is bound at residue His451. Glu485 contributes to the ATP binding site. Position 492 (Arg492) interacts with L-aspartate. 537–540 is a binding site for ATP; that stretch reads GWDR. A disordered region spans residues 566-594; sequence PLTDAPAPITAQQRKESGIDAQPKRVQQA.

Belongs to the class-II aminoacyl-tRNA synthetase family. Type 1 subfamily. As to quaternary structure, homodimer.

The protein localises to the cytoplasm. It carries out the reaction tRNA(Asx) + L-aspartate + ATP = L-aspartyl-tRNA(Asx) + AMP + diphosphate. Aspartyl-tRNA synthetase with relaxed tRNA specificity since it is able to aspartylate not only its cognate tRNA(Asp) but also tRNA(Asn). Reaction proceeds in two steps: L-aspartate is first activated by ATP to form Asp-AMP and then transferred to the acceptor end of tRNA(Asp/Asn). This Mycobacterium tuberculosis (strain CDC 1551 / Oshkosh) protein is Aspartate--tRNA(Asp/Asn) ligase.